The primary structure comprises 335 residues: Protein FATTY ACID EXPORT 3, chloroplastic (335 aa).

The transit peptide at 1–72 directs the protein to the chloroplast; it reads MMSIPMELMS…PEVLLNRSVV (72 aa). A disordered region spans residues 82 to 101; that stretch reads GESGVEVGKEKSDIDVEDDT. Positions 88-101 are enriched in basic and acidic residues; the sequence is VGKEKSDIDVEDDT. Residues 101–160 adopt a coiled-coil conformation; the sequence is TSKEAWKQTLESFKEQVSKMQSVSSEAYSVNSQKAMTVLKETSEQLRIQAEKAKEELGTK. 3 helical membrane passes run 205-225, 228-248, and 286-306; these read FHVG…NFMV, SIPA…LSLA, and STFL…FYLY. Residues 316–335 are disordered; sequence PTLEDGGEDESSDGFVRSEG.

The protein belongs to the TMEM14 family.

It localises to the plastid. The protein resides in the chloroplast membrane. Its function is as follows. May be involved in free fatty acids export from the plastids. This Arabidopsis thaliana (Mouse-ear cress) protein is Protein FATTY ACID EXPORT 3, chloroplastic.